We begin with the raw amino-acid sequence, 393 residues long: Acyltransferase ato1 (393 aa).

It belongs to the lysine N-acyltransferase mbtK family.

Its pathway is siderophore biosynthesis; ferrichrome biosynthesis. In terms of biological role, L-ornithine N(5)-monooxygenase; part of the siderophore biosynthetic pathway. Omphalotus olearius produces ferrichrome A, but no other siderophore has been detected. Ferrichrome A consists of a hexapeptide ring made up of one glycine, two serine, and three N(5)-hydroxyornithine amino acid residues, the latter acylated by trans-(alpha-methyl)-glutaconic acid residues. The biosynthesis of ferrichrome A depends on the hydroxylation of ornithine to N(5)-hydroxyornithine, catalyzed by the monooxygenase omo1. The second step, the acylation of N(5)-hydroxy-L-ornithine is probably catalyzed by the N-acyltransferase ato1. Finally, assembly of ferrichrome A is catalyzed by the nonribosomal peptide synthase (NRPS) fso1. This Omphalotus olearius (Jack o'lantern) protein is Acyltransferase ato1.